The sequence spans 100 residues: Small ribosomal subunit protein uS14c (100 aa).

This sequence belongs to the universal ribosomal protein uS14 family. Part of the 30S ribosomal subunit.

It is found in the plastid. The protein localises to the chloroplast. Functionally, binds 16S rRNA, required for the assembly of 30S particles. The sequence is that of Small ribosomal subunit protein uS14c from Carica papaya (Papaya).